Consider the following 513-residue polypeptide: GMP synthase [glutamine-hydrolyzing] (513 aa).

The Glutamine amidotransferase type-1 domain maps to M9–E198. The Nucleophile role is filled by C86. Active-site residues include H172 and E174. The GMPS ATP-PPase domain occupies W199–R388. ATP is bound at residue S226 to S232.

As to quaternary structure, homodimer.

It catalyses the reaction XMP + L-glutamine + ATP + H2O = GMP + L-glutamate + AMP + diphosphate + 2 H(+). It participates in purine metabolism; GMP biosynthesis; GMP from XMP (L-Gln route): step 1/1. In terms of biological role, catalyzes the synthesis of GMP from XMP. This Staphylococcus carnosus (strain TM300) protein is GMP synthase [glutamine-hydrolyzing].